The sequence spans 76 residues: MKLTCMMIVAVLFLTAWTFVTAVPHSSNALENLYLKAHHEMNNPEDSELNKRCYDSGTSCNTGNQCCSGWCIFVCL.

The first 22 residues, 1–22, serve as a signal peptide directing secretion; it reads MKLTCMMIVAVLFLTAWTFVTA. The propeptide occupies 23 to 50; the sequence is VPHSSNALENLYLKAHHEMNNPEDSELN. 3 disulfide bridges follow: Cys-53-Cys-67, Cys-60-Cys-71, and Cys-66-Cys-75.

The protein belongs to the conotoxin O1 superfamily. As to expression, expressed by the venom duct.

Its subcellular location is the secreted. Its function is as follows. Omega-conotoxins act at presynaptic membranes, they bind and block voltage-gated calcium channels. The chain is Omega-conotoxin-like TeAr94 from Conus textile (Cloth-of-gold cone).